We begin with the raw amino-acid sequence, 354 residues long: Divinyl chlorophyll a/b light-harvesting protein PcbF (354 aa).

6 helical membrane-spanning segments follow: residues 27–47, 88–108, 140–160, 201–221, 248–268, and 315–335; these read FIAS…SNTL, VVTL…GGLL, FILG…VEWA, VMGG…FHAI, AILS…AFWC, and TANF…WHAL.

Belongs to the PsbB/PsbC family. IsiA/Pcb subfamily. In terms of assembly, the antenna complex consists of divinyl chlorophylls (a and b) and divinyl chlorophyll a/b binding proteins and binds more divinyl chlorophyll b than does the antenna complex from high-light-adapted Prochlorococcus. Divinyl chlorophyll a is required as a cofactor. Requires divinyl chlorophyll b as cofactor.

It localises to the cellular thylakoid membrane. Functionally, the antenna complex functions as a light receptor, it captures and delivers excitation energy to photosystems II and I. The Prochlorales pcb genes are not related to higher plant LHCs. The polypeptide is Divinyl chlorophyll a/b light-harvesting protein PcbF (pcbF) (Prochlorococcus marinus (strain SARG / CCMP1375 / SS120)).